The chain runs to 492 residues: FAD-containing monooxygenase EthA (492 aa).

FAD contacts are provided by residues S15, E36, T44–L47, D56, and V104. R54 to D56 is an NADP(+) binding site. Residues S183–T189 and R207–S208 contribute to the NADP(+) site.

The protein belongs to the FAD-binding monooxygenase family. FAD serves as cofactor.

It is found in the cell membrane. It catalyses the reaction ethionamide + NADPH + O2 + H(+) = ethionamide S-oxide + NADP(+) + H2O. Its function is as follows. Monooxygenase able to convert a wide range of ketones to the corresponding esters or lactones via a Baeyer-Villiger oxidation reaction. Can act on long-chain aliphatic ketones (2-hexanone to 2-dodecanone) and on aromatic ketones (phenylacetone and benzylacetone). Is also able to catalyze enantioselective sulfoxidation of methyl-p-tolylsulfide. In vivo, likely functions as a BVMO, but the exact nature of the physiological substrate(s) remains to be established. Functionally, is responsible for the activation of several thiocarbamide-containing pro-drugs, such as ethionamide (ETH), isoxyl (ISO) and thiacetazone (TAC), into reactive species. This Mycolicibacterium smegmatis (strain ATCC 700084 / mc(2)155) (Mycobacterium smegmatis) protein is FAD-containing monooxygenase EthA (ethA).